The chain runs to 308 residues: N-acetyl-gamma-glutamyl-phosphate reductase (308 aa).

C116 is a catalytic residue.

This sequence belongs to the NAGSA dehydrogenase family. Type 2 subfamily.

It is found in the cytoplasm. The enzyme catalyses N-acetyl-L-glutamate 5-semialdehyde + phosphate + NADP(+) = N-acetyl-L-glutamyl 5-phosphate + NADPH + H(+). It participates in amino-acid biosynthesis; L-arginine biosynthesis; N(2)-acetyl-L-ornithine from L-glutamate: step 3/4. In terms of biological role, catalyzes the NADPH-dependent reduction of N-acetyl-5-glutamyl phosphate to yield N-acetyl-L-glutamate 5-semialdehyde. This Mesorhizobium japonicum (strain LMG 29417 / CECT 9101 / MAFF 303099) (Mesorhizobium loti (strain MAFF 303099)) protein is N-acetyl-gamma-glutamyl-phosphate reductase.